A 762-amino-acid chain; its full sequence is Endothelin-converting enzyme 1 (762 aa).

Topologically, residues 1 to 60 (MGSLRPPQGLGLQWSSFFLGKKGPGLTVSLPLLASSLQVNFRSPRSGQRCWAARTSVEKR) are cytoplasmic. A helical; Signal-anchor for type II membrane protein transmembrane segment spans residues 61–81 (LVVLVTLLAAGLVACLAALGI). The Extracellular portion of the chain corresponds to 82–762 (QYRTRTPPVC…MNPRHKCEVW (681 aa)). A Peptidase M13 domain is found at 90 to 762 (VCLTEACVSV…MNPRHKCEVW (673 aa)). Disulfide bonds link cysteine 91/cysteine 96, cysteine 114/cysteine 747, cysteine 122/cysteine 707, cysteine 177/cysteine 427, and cysteine 636/cysteine 759. Residues asparagine 158, asparagine 179, asparagine 202, asparagine 262, asparagine 308, asparagine 354, asparagine 375, and asparagine 531 are each glycosylated (N-linked (GlcNAc...) asparagine). A Zn(2+)-binding site is contributed by histidine 599. Residue glutamate 600 is part of the active site. A Zn(2+)-binding site is contributed by histidine 603. Asparagine 624 and asparagine 643 each carry an N-linked (GlcNAc...) asparagine glycan. Glutamate 659 contacts Zn(2+). Aspartate 663 (proton donor) is an active-site residue.

The protein belongs to the peptidase M13 family. In terms of assembly, homodimer; disulfide-linked. Interacts with PPP1R16B. Interacts with TSPAN8; this interaction recruits the endothelin converting enzyme ECE1 to tetraspanin-enriched microdomains and positively modulates its enzymatic activity. Requires Zn(2+) as cofactor. In terms of tissue distribution, all isoforms are expressed in aortic endothelial cells. Isoform A is also expressed in liver; isoform B in smooth muscle cells and fibroblasts; isoform C in aortic endothelial cells, smooth muscle cells, fibroblasts, liver and lung, and isoform D in smooth muscle cells.

It localises to the cell membrane. It catalyses the reaction Hydrolysis of the 21-Trp-|-Val-22 bond in big endothelin to form endothelin 1.. Inhibited by phosphoramidon. Functionally, converts big endothelin-1 to endothelin-1. This chain is Endothelin-converting enzyme 1 (Ece1), found in Rattus norvegicus (Rat).